We begin with the raw amino-acid sequence, 273 residues long: Large ribosomal subunit protein uL2 (273 aa).

The disordered stretch occupies residues 228-273; it reads VDHPHGGGEGKTSGGRHPVTPWGFPTKGKKTRKNKRTSKFIVKKRK. Residues 254-273 are compositionally biased toward basic residues; that stretch reads KGKKTRKNKRTSKFIVKKRK.

Belongs to the universal ribosomal protein uL2 family. As to quaternary structure, part of the 50S ribosomal subunit. Forms a bridge to the 30S subunit in the 70S ribosome.

In terms of biological role, one of the primary rRNA binding proteins. Required for association of the 30S and 50S subunits to form the 70S ribosome, for tRNA binding and peptide bond formation. It has been suggested to have peptidyltransferase activity; this is somewhat controversial. Makes several contacts with the 16S rRNA in the 70S ribosome. This chain is Large ribosomal subunit protein uL2, found in Rickettsia massiliae (strain Mtu5).